A 189-amino-acid chain; its full sequence is Elongation factor P (189 aa).

N6-(3,6-diaminohexanoyl)-5-hydroxylysine is present on K34.

It belongs to the elongation factor P family. In terms of processing, may be beta-lysylated on the epsilon-amino group of Lys-34 by the combined action of EpmA and EpmB, and then hydroxylated on the C5 position of the same residue by EpmC (if this protein is present). Lysylation is critical for the stimulatory effect of EF-P on peptide-bond formation. The lysylation moiety may extend toward the peptidyltransferase center and stabilize the terminal 3-CCA end of the tRNA. Hydroxylation of the C5 position on Lys-34 may allow additional potential stabilizing hydrogen-bond interactions with the P-tRNA.

The protein localises to the cytoplasm. It functions in the pathway protein biosynthesis; polypeptide chain elongation. Involved in peptide bond synthesis. Alleviates ribosome stalling that occurs when 3 or more consecutive Pro residues or the sequence PPG is present in a protein, possibly by augmenting the peptidyl transferase activity of the ribosome. Modification of Lys-34 is required for alleviation. This chain is Elongation factor P, found in Buchnera aphidicola subsp. Baizongia pistaciae (strain Bp).